We begin with the raw amino-acid sequence, 316 residues long: 4-hydroxy-3-methylbut-2-enyl diphosphate reductase (316 aa).

[4Fe-4S] cluster is bound at residue Cys12. His41 and His74 together coordinate (2E)-4-hydroxy-3-methylbut-2-enyl diphosphate. Dimethylallyl diphosphate-binding residues include His41 and His74. Positions 41 and 74 each coordinate isopentenyl diphosphate. [4Fe-4S] cluster is bound at residue Cys96. His124 contacts (2E)-4-hydroxy-3-methylbut-2-enyl diphosphate. Residue His124 participates in dimethylallyl diphosphate binding. Residue His124 coordinates isopentenyl diphosphate. The active-site Proton donor is Glu126. Thr169 serves as a coordination point for (2E)-4-hydroxy-3-methylbut-2-enyl diphosphate. Cys199 serves as a coordination point for [4Fe-4S] cluster. (2E)-4-hydroxy-3-methylbut-2-enyl diphosphate-binding residues include Ser227, Ser228, Asn229, and Ser271. 4 residues coordinate dimethylallyl diphosphate: Ser227, Ser228, Asn229, and Ser271. Isopentenyl diphosphate-binding residues include Ser227, Ser228, Asn229, and Ser271.

Belongs to the IspH family. The cofactor is [4Fe-4S] cluster.

It catalyses the reaction isopentenyl diphosphate + 2 oxidized [2Fe-2S]-[ferredoxin] + H2O = (2E)-4-hydroxy-3-methylbut-2-enyl diphosphate + 2 reduced [2Fe-2S]-[ferredoxin] + 2 H(+). It carries out the reaction dimethylallyl diphosphate + 2 oxidized [2Fe-2S]-[ferredoxin] + H2O = (2E)-4-hydroxy-3-methylbut-2-enyl diphosphate + 2 reduced [2Fe-2S]-[ferredoxin] + 2 H(+). It participates in isoprenoid biosynthesis; dimethylallyl diphosphate biosynthesis; dimethylallyl diphosphate from (2E)-4-hydroxy-3-methylbutenyl diphosphate: step 1/1. The protein operates within isoprenoid biosynthesis; isopentenyl diphosphate biosynthesis via DXP pathway; isopentenyl diphosphate from 1-deoxy-D-xylulose 5-phosphate: step 6/6. Its function is as follows. Catalyzes the conversion of 1-hydroxy-2-methyl-2-(E)-butenyl 4-diphosphate (HMBPP) into a mixture of isopentenyl diphosphate (IPP) and dimethylallyl diphosphate (DMAPP). Acts in the terminal step of the DOXP/MEP pathway for isoprenoid precursor biosynthesis. In Xanthomonas campestris pv. campestris (strain 8004), this protein is 4-hydroxy-3-methylbut-2-enyl diphosphate reductase.